We begin with the raw amino-acid sequence, 414 residues long: MAGMAPEGSQFDAKNYDSKMQELLSQGETEEFFTSYDEVHESFDDMGLQENLLRGIYAYGFEKPSAIQQRGIVPFCKGLDVIQQAQSGTGKTATFCSGILQQLDYGLVECQALVLAPTRELAQQIEKVMRALGDYLGVKVHACVGGTSVREDQRILASGVHVVVGTPGRVFDIVRRQSLRPDNIKMFVLDEADEMLSRGFKDQIYDIFQLLPGKIQVGVFSATMPPEALEITRKFMNKPVRILVKRDELTLEGIKQFYVNVEKEEWKLDTLCDLYETLAITQSVIFVNTRRKVDWLTDKMRGRDHTVSATHGDMDQNTRDIIMREFRSGSSRVLITTDLLARGIDVQQVSLVINYDLPTQPENYQHRIGRSGRFGRKGVAINFVTREDERMLFDIQKFYNVVIEELPANVADLL.

The Q motif signature appears at 41 to 69; sequence ESFDDMGLQENLLRGIYAYGFEKPSAIQQ. The Helicase ATP-binding domain occupies 72–242; the sequence is IVPFCKGLDV…RKFMNKPVRI (171 aa). 85–92 contributes to the ATP binding site; that stretch reads AQSGTGKT. Residues 190–193 carry the DEAD box motif; sequence DEAD. Positions 253 to 414 constitute a Helicase C-terminal domain; sequence GIKQFYVNVE…ELPANVADLL (162 aa).

The protein belongs to the DEAD box helicase family. eIF4A subfamily. As to quaternary structure, eIF4F is a multi-subunit complex, the composition of which varies with external and internal environmental conditions. It is composed of at least EIF4A, EIF4E and EIF4G.

The enzyme catalyses ATP + H2O = ADP + phosphate + H(+). Its function is as follows. ATP-dependent RNA helicase which is a subunit of the eIF4F complex involved in cap recognition and is required for mRNA binding to ribosome. In the current model of translation initiation, eIF4A unwinds RNA secondary structures in the 5'-UTR of mRNAs which is necessary to allow efficient binding of the small ribosomal subunit, and subsequent scanning for the initiator codon. This is Eukaryotic initiation factor 4A from Triticum aestivum (Wheat).